The sequence spans 580 residues: Laccase-20 (580 aa).

The first 23 residues, 1-23 (MVASLLCTVAVAVLAVAAVGGEA), serve as a signal peptide directing secretion. Plastocyanin-like domains follow at residues 31 to 147 (VVHE…PRDG) and 156 to 310 (KDVP…YTGV). Residues N36 and N42 are each glycosylated (N-linked (GlcNAc...) asparagine). Residues H81 and H83 each coordinate Cu cation. N115 is a glycosylation site (N-linked (GlcNAc...) asparagine). 2 residues coordinate Cu cation: H126 and H128. N-linked (GlcNAc...) asparagine glycans are attached at residues N200, N339, N373, N392, N399, N429, and N460. The Plastocyanin-like 3 domain maps to 419 to 561 (DFPVRPPRPY…ATAFIVEDGP (143 aa)). 8 residues coordinate Cu cation: N478, H481, H483, H540, C541, H542, H546, and M551. The disordered stretch occupies residues 560 to 580 (GPTPETSLPPPPPEFKRCDAS).

The protein belongs to the multicopper oxidase family. Cu cation is required as a cofactor.

It is found in the secreted. Its subcellular location is the extracellular space. The protein resides in the apoplast. The catalysed reaction is 4 hydroquinone + O2 = 4 benzosemiquinone + 2 H2O. In terms of biological role, lignin degradation and detoxification of lignin-derived products. This chain is Laccase-20 (LAC20), found in Oryza sativa subsp. japonica (Rice).